The following is a 201-amino-acid chain: MIALIDYKAGNLNSVAKAFEKIGAINFIAKNPKDLQKADKLLLPGVGSFKEAMKNLKELGFIEALKEQVLVQKKPILGICLGMQLFLERGYEGGVCEGLGFIEGEVVKFEEDLNLKIPHMGWNELEILKQVPLYQGIDNKSDFYFVHSFYVKCKDEFVSAKAQYGHKFVASLQKDHIFATQFHPEKSQNLGLKLLENFIRL.

The 201-residue stretch at 1 to 201 (MIALIDYKAG…LKLLENFIRL (201 aa)) folds into the Glutamine amidotransferase type-1 domain. C80 (nucleophile) is an active-site residue. Active-site residues include H183 and E185.

Heterodimer of HisH and HisF.

It localises to the cytoplasm. It carries out the reaction 5-[(5-phospho-1-deoxy-D-ribulos-1-ylimino)methylamino]-1-(5-phospho-beta-D-ribosyl)imidazole-4-carboxamide + L-glutamine = D-erythro-1-(imidazol-4-yl)glycerol 3-phosphate + 5-amino-1-(5-phospho-beta-D-ribosyl)imidazole-4-carboxamide + L-glutamate + H(+). The enzyme catalyses L-glutamine + H2O = L-glutamate + NH4(+). It functions in the pathway amino-acid biosynthesis; L-histidine biosynthesis; L-histidine from 5-phospho-alpha-D-ribose 1-diphosphate: step 5/9. Functionally, IGPS catalyzes the conversion of PRFAR and glutamine to IGP, AICAR and glutamate. The HisH subunit provides the glutamine amidotransferase activity that produces the ammonia necessary to HisF for the synthesis of IGP and AICAR. This chain is Imidazole glycerol phosphate synthase subunit HisH 1, found in Campylobacter jejuni (strain RM1221).